A 52-amino-acid chain; its full sequence is Large ribosomal subunit protein bL32c (52 aa).

Belongs to the bacterial ribosomal protein bL32 family.

Its subcellular location is the plastid. It localises to the chloroplast. The sequence is that of Large ribosomal subunit protein bL32c from Arabis hirsuta (Hairy rock-cress).